Here is a 921-residue protein sequence, read N- to C-terminus: Guanylate kinase-associated protein mars (921 aa).

Ser-49 is modified (phosphoserine). Thr-51 carries the post-translational modification Phosphothreonine. Phosphoserine occurs at positions 76 and 170. Tyr-172 carries the phosphotyrosine modification. Disordered regions lie at residues 179 to 208 and 273 to 325; these read GKGK…TVAA and RPTP…PLGN. Composition is skewed to low complexity over residues 193 to 208 and 273 to 285; these read KPTS…TVAA and RPTP…AKTP. The residue at position 444 (Ser-444) is a Phosphoserine. The segment at 500 to 531 is disordered; sequence QTTVKEDTGDSTLVPEGTKTPPRRESNGMPNY. The residue at position 519 (Thr-519) is a Phosphothreonine. Ser-554 is modified (phosphoserine). Disordered stretches follow at residues 641 to 660 and 743 to 763; these read AGAT…SKPV and TKVE…RHSS. Phosphoserine is present on residues Ser-785 and Ser-792. Disordered stretches follow at residues 809 to 833 and 861 to 921; these read QNAA…TKRQ and ETVG…SEFM. Position 826 is a phosphothreonine (Thr-826). A compositionally biased stretch (polar residues) spans 878–907; the sequence is EASTESGSLEQNPGRDSNQENEATPRTYTL.

This sequence belongs to the SAPAP family. In terms of tissue distribution, expressed in the central nervous system and at different stages of gametogenesis. In embryos, it is expressed in central nervous system and brain. In testis, it is strongly expressed in pre-meiotic germ cells, but is not found in somatic or post-meiotic cells.

The protein localises to the cell membrane. It is found in the nucleus. It localises to the nucleoplasm. The protein resides in the cytoplasm. Its subcellular location is the cytoskeleton. The protein localises to the spindle. In terms of biological role, cell cycle regulator. This chain is Guanylate kinase-associated protein mars (mars), found in Drosophila melanogaster (Fruit fly).